A 132-amino-acid polypeptide reads, in one-letter code: Phosphoribosyl-AMP cyclohydrolase (132 aa).

Mg(2+) is bound at residue aspartate 89. Cysteine 90 contacts Zn(2+). 2 residues coordinate Mg(2+): aspartate 91 and aspartate 93. Cysteine 106 and cysteine 113 together coordinate Zn(2+).

It belongs to the PRA-CH family. Homodimer. It depends on Mg(2+) as a cofactor. Zn(2+) serves as cofactor.

It localises to the cytoplasm. The enzyme catalyses 1-(5-phospho-beta-D-ribosyl)-5'-AMP + H2O = 1-(5-phospho-beta-D-ribosyl)-5-[(5-phospho-beta-D-ribosylamino)methylideneamino]imidazole-4-carboxamide. Its pathway is amino-acid biosynthesis; L-histidine biosynthesis; L-histidine from 5-phospho-alpha-D-ribose 1-diphosphate: step 3/9. Catalyzes the hydrolysis of the adenine ring of phosphoribosyl-AMP. This is Phosphoribosyl-AMP cyclohydrolase from Renibacterium salmoninarum (strain ATCC 33209 / DSM 20767 / JCM 11484 / NBRC 15589 / NCIMB 2235).